Reading from the N-terminus, the 151-residue chain is MATLERKLVEMLKAPVEALGHELWGLEYIQAGKHSILRLYIDNEKGIFIEDCAETSRQVSAVMDVEDPISTEYTLEVSSPGVDRPLFTAEQYQLYIGETVKVQVTMPVAGSRNLKGTVIGIEGQMLTLSVDGNELIIALDNIRKGNLIAKF.

Belongs to the RimP family.

The protein localises to the cytoplasm. Functionally, required for maturation of 30S ribosomal subunits. This chain is Ribosome maturation factor RimP, found in Shewanella piezotolerans (strain WP3 / JCM 13877).